Consider the following 72-residue polypeptide: Prokaryotic ubiquitin-like protein Pup (72 aa).

A compositionally biased stretch (gly residues) spans 1–10; sequence MATKDTGGGQ. The disordered stretch occupies residues 1-45; that stretch reads MATKDTGGGQQKATRSTEEVEEQAQDAQASEDLKERQEKLSDDVD. The stretch at 10–60 forms a coiled coil; the sequence is QQKATRSTEEVEEQAQDAQASEDLKERQEKLSDDVDSVLDEIDDVLEENAE. Residues 28-66 are ARC ATPase binding; that stretch reads QASEDLKERQEKLSDDVDSVLDEIDDVLEENAEDFVRSF. The segment covering 31-42 has biased composition (basic and acidic residues); sequence EDLKERQEKLSD. Glutamate 72 participates in a covalent cross-link: Isoglutamyl lysine isopeptide (Glu-Lys) (interchain with K-? in acceptor proteins).

This sequence belongs to the prokaryotic ubiquitin-like protein family. In terms of assembly, strongly interacts with the proteasome-associated ATPase ARC through a hydrophobic interface; the interacting region of Pup lies in its C-terminal half. There is one Pup binding site per ARC hexamer ring.

It participates in protein degradation; proteasomal Pup-dependent pathway. Functionally, protein modifier that is covalently attached to lysine residues of substrate proteins, thereby targeting them for proteasomal degradation. The tagging system is termed pupylation. The polypeptide is Prokaryotic ubiquitin-like protein Pup (Streptomyces coelicolor (strain ATCC BAA-471 / A3(2) / M145)).